The chain runs to 127 residues: Ribosome-binding factor A (127 aa).

The protein belongs to the RbfA family. As to quaternary structure, monomer. Binds 30S ribosomal subunits, but not 50S ribosomal subunits or 70S ribosomes.

Its subcellular location is the cytoplasm. Functionally, one of several proteins that assist in the late maturation steps of the functional core of the 30S ribosomal subunit. Associates with free 30S ribosomal subunits (but not with 30S subunits that are part of 70S ribosomes or polysomes). Required for efficient processing of 16S rRNA. May interact with the 5'-terminal helix region of 16S rRNA. The polypeptide is Ribosome-binding factor A (Glaesserella parasuis serovar 5 (strain SH0165) (Haemophilus parasuis)).